A 550-amino-acid chain; its full sequence is MAFNDLLQQVGGVGRFQQIQVTLVVLPLLLMASHNTLQNFTAAIPTHHCRPPADANLSKNGGLEVWLPRDRKGQPESCLRFTSPQWGPPFPNGTEANGTGATEPCTDGWIYDNSTFPSTIVTEWDLVCSHRALRQLAQSLYMVGVLLGAMVFGYLADRLGRRKVLILNYLQTAVSGTCTAFAPNFSIYCAFRLLSGMSLAGISLNCMTLNVEWMPIHTRACVGTLIGYVYSLGQFLLAGVAYAVPHWRHLQLLVSAPFFAFFIYSWFFIESARWHSSSGRLDLTLRALQRVARINGKREEGAKLSMEVLRASLQKELTMGKGQASAMELLRCPTLRHLFLCLSMLWFATSFAYYGLVMDLQGFGVSIYLIQVIFGAVDLPAKLVGFLVINSLGRRPAQMAALLLAGICILLNGVIPQDQSIVRTSLAVPGKGCLAASFNCIFLYTGELYPTMIRQTGMGMGSTMARVGSIVSPLVSMTAELYPSMPLFIYGAVPVAASAVTVLLPETLGQPLPDTVQDLESRKGKQTRQQQEHQKYMVPLQASAQEKNGL.

Residues 1–9 (MAFNDLLQQ) lie on the Cytoplasmic side of the membrane. Residues 10–30 (VGGVGRFQQIQVTLVVLPLLL) traverse the membrane as a helical segment. The Extracellular segment spans residues 31–135 (MASHNTLQNF…LVCSHRALRQ (105 aa)). Residues asparagine 39, asparagine 92, and asparagine 113 are each glycosylated (N-linked (GlcNAc...) asparagine). A helical membrane pass occupies residues 136-156 (LAQSLYMVGVLLGAMVFGYLA). Residues 157 to 164 (DRLGRRKV) lie on the Cytoplasmic side of the membrane. Residues 165–187 (LILNYLQTAVSGTCTAFAPNFSI) traverse the membrane as a helical segment. Over 188-195 (YCAFRLLS) the chain is Extracellular. The helical transmembrane segment at 196 to 216 (GMSLAGISLNCMTLNVEWMPI) threads the bilayer. Over 217–224 (HTRACVGT) the chain is Cytoplasmic. Residues 225-245 (LIGYVYSLGQFLLAGVAYAVP) traverse the membrane as a helical segment. At 246-248 (HWR) the chain is on the extracellular side. A helical membrane pass occupies residues 249-269 (HLQLLVSAPFFAFFIYSWFFI). Residues 270 to 337 (ESARWHSSSG…ELLRCPTLRH (68 aa)) lie on the Cytoplasmic side of the membrane. A helical transmembrane segment spans residues 338–358 (LFLCLSMLWFATSFAYYGLVM). At 359–368 (DLQGFGVSIY) the chain is on the extracellular side. The helical transmembrane segment at 369-389 (LIQVIFGAVDLPAKLVGFLVI) threads the bilayer. Topologically, residues 390–395 (NSLGRR) are cytoplasmic. A helical membrane pass occupies residues 396-416 (PAQMAALLLAGICILLNGVIP). At 417 to 420 (QDQS) the chain is on the extracellular side. A helical transmembrane segment spans residues 421-444 (IVRTSLAVPGKGCLAASFNCIFLY). At 445–455 (TGELYPTMIRQ) the chain is on the cytoplasmic side. The helical transmembrane segment at 456 to 475 (TGMGMGSTMARVGSIVSPLV) threads the bilayer. At 476-484 (SMTAELYPS) the chain is on the extracellular side. Residues 485 to 505 (MPLFIYGAVPVAASAVTVLLP) traverse the membrane as a helical segment. Over 506-550 (ETLGQPLPDTVQDLESRKGKQTRQQQEHQKYMVPLQASAQEKNGL) the chain is Cytoplasmic. Residues 514 to 550 (DTVQDLESRKGKQTRQQQEHQKYMVPLQASAQEKNGL) are disordered.

Belongs to the major facilitator (TC 2.A.1) superfamily. Organic cation transporter (TC 2.A.1.19) family. Post-translationally, glycosylated. Glycosylation is necessary for proper targeting of the transporter to the plasma membrane.

The protein resides in the cell membrane. The enzyme catalyses prostaglandin F2alpha(out) = prostaglandin F2alpha(in). The catalysed reaction is prostaglandin E2(out) = prostaglandin E2(in). Functionally, involved in the renal elimination of endogenous and exogenous organic anions. Functions as organic anion exchanger when the uptake of one molecule of organic anion is coupled with an efflux of one molecule of endogenous dicarboxylic acid (glutarate, ketoglutarate, etc). Mediates the transport of prostaglandin E2 (PGE2) and prostaglandin F2-alpha (PGF2-alpha) and may be involved in their renal excretion. Also mediates the sodium-independent uptake of p-aminohippurate (PAH), 2,3-dimercapto-1-propanesulfonic acid (DMPS), cidofovir, adefovir, 9-(2-phosphonylmethoxyethyl) guanine (PMEG), 9-(2-phosphonylmethoxyethyl) diaminopurine (PMEDAP), ochratoxin (OTA), acyclovir (ACV), 3'-azido-3-'deoxythymidine (AZT), cimetidine (CMD), 2,4-dichloro-phenoxyacetate (2,4-D), hippurate (HA), indoleacetate (IA), indoxyl sulfate (IS) and 3-carboxy-4-methyl-5-propyl-2-furanpropionate (CMPF) and edaravone sulfate. PAH uptake is inhibited by p-chloromercuribenzenesulphonate (PCMBS), diethyl pyrocarbonate (DEPC), indomethacin, sulindac, diclofenac, carprofen, okadaic acid, benzothiazolylcysteine (BTC), S-chlorotrifluoroethylcysteine (CTFC), cysteine S-conjugates S-dichlorovinylcysteine (DCVC), furosemide, steviol, phorbol 12-myristate 13-acetate (PMA), calcium ionophore A23187, benzylpenicillin, bumetamide, losartan, probenecid, phenol red, urate, glutarate and alpha-ketoglutarate. The protein is Solute carrier family 22 member 6 (SLC22A6) of Pongo abelii (Sumatran orangutan).